A 5654-amino-acid polypeptide reads, in one-letter code: Mucin-5AC (5654 aa).

An N-terminal signal peptide occupies residues 1–27; it reads MSVGRRKLALLWALALALACTRHTGHA. The interval 27–49 is disordered; sequence AQDGSSESSYKHHPALSPIARGP. The VWFD 1 domain maps to 79–249; that stretch reads RVCSTWGSFH…KMDDPTDQCQ (171 aa). 2 cysteine pairs are disulfide-bonded: cysteine 81–cysteine 211 and cysteine 103–cysteine 248. Glutamate 198 serves as a coordination point for Cu(2+). 2 N-linked (GlcNAc...) asparagine glycosylation sites follow: asparagine 205 and asparagine 258. Cu(2+)-binding residues include histidine 320 and histidine 367. In terms of domain architecture, TIL 1 spans 338 to 394; sequence CPNNMQYHECRSPCADTCSNQEHSRACEDHCVAGCFCPEGTVLDDIGQTGCVPVSKC. The VWFC 1 domain occupies 394-465; sequence CACVYNGAAY…CSYVLTKPCD (72 aa). The N-linked (GlcNAc...) asparagine glycan is linked to asparagine 415. In terms of domain architecture, VWFD 2 spans 432-607; that stretch reads GTCSVLGGAH…NTFKTQAACP (176 aa). Intrachain disulfides connect cysteine 434/cysteine 571, cysteine 456/cysteine 606, and cysteine 478/cysteine 486. N-linked (GlcNAc...) asparagine glycosylation occurs at asparagine 524. TIL domains lie at 704-761 and 818-863; these read CPKS…ASNC and DTGA…AEDC. Residues 901–1072 enclose the VWFD 3 domain; it reads ATCAVYGDGH…NSWKLSPSCP (172 aa). Intrachain disulfides connect cysteine 903–cysteine 1036, cysteine 925–cysteine 1071, cysteine 934–cysteine 1033, and cysteine 953–cysteine 960. A glycan (N-linked (GlcNAc...) asparagine) is linked at asparagine 1308. The tract at residues 1336–1377 is disordered; sequence LVVSSTHTPSNGPSSAHTGPPSSAWPTTAGTSPRTRLPTASA. The span at 1338–1377 shows a compositional bias: polar residues; the sequence is VSSTHTPSNGPSSAHTGPPSSAWPTTAGTSPRTRLPTASA. One copy of the Cys-rich subdomain 1 repeat lies at 1383–1481; that stretch reads CGEKCLWSPW…RVQCCTPLPC (99 aa). The segment at 1383–4731 is 9 X Cys-rich subdomain repeats; sequence CGEKCLWSPW…VLCCETPRGC (3349 aa). Tryptophan 1389 carries C-linked (Man) tryptophan glycosylation. 2 stretches are compositionally biased toward low complexity: residues 1483-1539 and 1547-1575; these read TSSS…TFST and ATSTSSMSTTAPGTSVVSSKPTPTEPSTS. The interval 1483-1575 is disordered; sequence TSSSPAQTTP…KPTPTEPSTS (93 aa). The Cys-rich subdomain 2 repeat unit spans residues 1577–1677; sequence CLQELCTWTE…IQCCETVNVC (101 aa). Residue tryptophan 1584 is glycosylated (C-linked (Man) tryptophan). The tract at residues 1688 to 1733 is disordered; sequence ATTRPTPHPTGAQTQTTFTTHMPSASTEQPTATSRGGPTATSVTQG. Residues 1697 to 1707 are compositionally biased toward low complexity; that stretch reads TGAQTQTTFTT. A compositionally biased stretch (polar residues) spans 1708-1733; that stretch reads HMPSASTEQPTATSRGGPTATSVTQG. Residues 1743–1847 form a Cys-rich subdomain 3 repeat; that stretch reads CHPRCTWTKW…VLCCETPRGC (105 aa). A C-linked (Man) tryptophan glycan is attached at tryptophan 1749. The disordered stretch occupies residues 1849–1948; the sequence is MTSTPGSTSS…KPTPTEPSTS (100 aa). 2 stretches are compositionally biased toward low complexity: residues 1850 to 1912 and 1920 to 1948; these read TSTP…TFST and ATSTSSMSTTAPGTSVVSSKPTPTEPSTS. A Cys-rich subdomain 4 repeat occupies 1950–2050; the sequence is CLQELCTWTE…IQCCETVNVC (101 aa). Tryptophan 1957 is a glycosylation site (C-linked (Man) tryptophan). A disordered region spans residues 2059–2110; sequence TVATTRPTPHPTGAQTQTTFTTHMPSASTEQPTATSRGGPTATSVTQGTHTT. The segment covering 2070–2080 has biased composition (low complexity); it reads TGAQTQTTFTT. Over residues 2081 to 2110 the composition is skewed to polar residues; sequence HMPSASTEQPTATSRGGPTATSVTQGTHTT. One copy of the Cys-rich subdomain 5 repeat lies at 2116–2220; sequence CHPRCTWTTW…VLCCETPKGC (105 aa). Tryptophan 2122 carries C-linked (Man) tryptophan glycosylation. Residues 2224–2234 are compositionally biased toward low complexity; the sequence is STPVTAPSTPS. A disordered region spans residues 2224-3214; the sequence is STPVTAPSTP…SHVSISKTTH (991 aa). A compositionally biased stretch (polar residues) spans 2235 to 2249; it reads GRATSPTQSTSSWQK. Low complexity-rich tracts occupy residues 2250–3184 and 3192–3214; these read SRTT…TPGP and PTTSTASVSKTSTSHVSISKTTH. The interval 2257-3200 is 107 X 8 AA approximate tandem repeats of T-T-S-T-T-S-A-P; it reads TTSTTSTPQT…VPTTSTASVS (944 aa). O-linked (GalNAc) threonine glycans are attached at residues threonine 2395, threonine 2405, threonine 2451, threonine 2461, threonine 2531, threonine 2541, threonine 2571, threonine 2581, threonine 2699, threonine 2709, threonine 2883, threonine 2893, threonine 2979, threonine 2989, threonine 3067, and threonine 3077. One copy of the Cys-rich subdomain 6 repeat lies at 3222–3326; sequence CHLRCTWTKW…VLCCETPKGC (105 aa). The C-linked (Man) tryptophan glycan is linked to tryptophan 3228. A compositionally biased stretch (low complexity) spans 3329–3340; that stretch reads TSTPVTAPSTPS. Residues 3329 to 3515 form a disordered region; that stretch reads TSTPVTAPST…SVSKTTHSQP (187 aa). A compositionally biased stretch (polar residues) spans 3341-3355; sequence GRATSPTQSTSSWQK. Residues 3356–3513 show a composition bias toward low complexity; that stretch reads SRTTTLVTTS…HVSVSKTTHS (158 aa). Positions 3363 to 3498 are 17 X 8 AA approximate tandem repeats of T-T-S-T-T-S-A-P; the sequence is TTSTTSTPQT…VTTTSTASVS (136 aa). Residues 3520 to 3660 form a Cys-rich subdomain 7 repeat; the sequence is CHPRCTWTKW…WQKSRTTTLV (141 aa). The C-linked (Man) tryptophan glycan is linked to tryptophan 3526. Over residues 3628-3638 the composition is skewed to low complexity; that stretch reads STSVTAPSTPS. Residues 3628–3951 form a disordered region; it reads STSVTAPSTP…KTTHSQPVTR (324 aa). The segment covering 3639 to 3660 has biased composition (polar residues); sequence GRATSPTQSTSSWQKSRTTTLV. The interval 3661-3931 is 34 X 8 AA approximate tandem repeats of T-T-S-T-T-S-A-P; the sequence is TSSITSTTQT…VPTTSTASVS (271 aa). The segment covering 3661-3946 has biased composition (low complexity); the sequence is TSSITSTTQT…HVSVSKTTHS (286 aa). Asparagine 3774 is a glycosylation site (N-linked (GlcNAc...) asparagine). One copy of the Cys-rich subdomain 8 repeat lies at 3953–4057; sequence CHPRCTWTKW…VLCCETPKGC (105 aa). Tryptophan 3959 carries C-linked (Man) tryptophan glycosylation. Positions 4060–4071 are enriched in low complexity; that stretch reads TSTPVTAPSTPS. Positions 4060–4625 are disordered; sequence TSTPVTAPST…KTTHSQPVTS (566 aa). The span at 4072–4088 shows a compositional bias: polar residues; it reads GRATSPTQSTSSWQKSR. A compositionally biased stretch (low complexity) spans 4089–4610; that stretch reads TTTLVTTSTT…TTPVSKTSTS (522 aa). Residues 4093–4595 are 58 X 8 AA approximate tandem repeats of T-T-S-T-T-S-A-P; that stretch reads VTTSTTSTPQ…TSGPGTTPSP (503 aa). Residues threonine 4224, threonine 4234, threonine 4296, threonine 4306, threonine 4320, threonine 4330, threonine 4376, threonine 4386, threonine 4440, threonine 4450, threonine 4480, threonine 4490, threonine 4512, threonine 4522, threonine 4568, and threonine 4578 are each glycosylated (O-linked (GalNAc) threonine). A compositionally biased stretch (polar residues) spans 4611-4624; sequence HLSVSKTTHSQPVT. The Cys-rich subdomain 9 repeat unit spans residues 4627 to 4731; that stretch reads CHPLCAWTKW…VLCCETPRGC (105 aa). Residue tryptophan 4633 is glycosylated (C-linked (Man) tryptophan). The interval 4830 to 4849 is disordered; it reads TLPPAPATSPSISTSEPVTE. Positions 4852 to 4918 constitute a VWFC 2 domain; the sequence is CPNAVPPRKK…DGCCHHYQCQ (67 aa). N-linked (GlcNAc...) asparagine glycans are attached at residues asparagine 4869 and asparagine 4942. In terms of domain architecture, VWFD 4 spans 4919–5103; that stretch reads CVCSGWGDPH…VSIPDQPACH (185 aa). 3 disulfides stabilise this stretch: cysteine 4921-cysteine 5063, cysteine 4943-cysteine 5102, and cysteine 4967-cysteine 4975. 3 N-linked (GlcNAc...) asparagine glycosylation sites follow: asparagine 5057, asparagine 5093, and asparagine 5236. The VWFC 3 domain occupies 5276–5345; that stretch reads PRCLGPHGEP…GQCCPQYSCA (70 aa). Asparagine 5347, asparagine 5377, asparagine 5386, asparagine 5455, and asparagine 5528 each carry an N-linked (GlcNAc...) asparagine glycan. A VWFC 4 domain is found at 5381-5448; it reads TVCSINGTLY…QSGQCCGTCV (68 aa). Intrachain disulfides connect cysteine 5532–cysteine 5582, cysteine 5546–cysteine 5596, cysteine 5557–cysteine 5612, and cysteine 5561–cysteine 5614. The CTCK domain maps to 5532 to 5620; the sequence is CAVYHRSLII…ECGCMGRRCP (89 aa). The N-linked (GlcNAc...) asparagine glycan is linked to asparagine 5591. The segment at 5622 to 5654 is disordered; that stretch reads PGDTQHSEEAEPEPSQEAESGSWERGVPVSPMH.

Homomultimer; disulfide-linked. The N- and C-terminus mediate their assembly into higher order structures to form filaments. The CTCK domains of two polypeptides associate in the endoplasmic reticulum to generate intermolecularly disulfide-bonded dimers. These dimers progress to the Golgi apparatus, which is a more acidic environment than the endoplasmic reticulum. Under acidic conditions, the N-termini form non-covalent intermolecular interactions that juxtapose assemblies from different CTCK-linked dimers to produce long, disulfide-linked polymers that remain highly compact until secretion. Post-translationally, C-, O- and N-glycosylated. O-glycosylated on the second and last Thr of the Thr-/Ser-rich tandem repeats TTPSPVPTTSTTSA. One form of glycosylation is also known as Lewis B (LeB) blood group antigen, a tetrasaccharide consisting of N-acetylglucosamine having a fucosyl residue attached. It has a role as an epitope and antigen and functions as a receptor for H.pylori binding and facilitates infection. C-mannosylation in the Cys-rich subdomains may be required for proper folding of these regions and for export from the endoplasmic reticulum during biosynthesis. Proteolytic cleavage in the C-terminal is initiated early in the secretory pathway and does not involve a serine protease. The extent of cleavage is increased in the acidic parts of the secretory pathway. Cleavage generates a reactive group which could link the protein to a primary amide. As to expression, highly expressed in surface mucosal cells of respiratory tract and stomach epithelia. Overexpressed in a number of carcinomas. Also expressed in Barrett's esophagus epithelium and in the proximal duodenum.

The protein resides in the secreted. In terms of biological role, gel-forming glycoprotein of gastric and respiratory tract epithelia that protects the mucosa from infection and chemical damage by binding to inhaled microorganisms and particles that are subsequently removed by the mucociliary system. Interacts with H.pylori in the gastric epithelium, Barrett's esophagus as well as in gastric metaplasia of the duodenum (GMD). The chain is Mucin-5AC from Homo sapiens (Human).